The following is a 292-amino-acid chain: Phosphoribosylaminoimidazole-succinocarboxamide synthase (292 aa).

The protein belongs to the SAICAR synthetase family.

The catalysed reaction is 5-amino-1-(5-phospho-D-ribosyl)imidazole-4-carboxylate + L-aspartate + ATP = (2S)-2-[5-amino-1-(5-phospho-beta-D-ribosyl)imidazole-4-carboxamido]succinate + ADP + phosphate + 2 H(+). It functions in the pathway purine metabolism; IMP biosynthesis via de novo pathway; 5-amino-1-(5-phospho-D-ribosyl)imidazole-4-carboxamide from 5-amino-1-(5-phospho-D-ribosyl)imidazole-4-carboxylate: step 1/2. The polypeptide is Phosphoribosylaminoimidazole-succinocarboxamide synthase (Thermodesulfovibrio yellowstonii (strain ATCC 51303 / DSM 11347 / YP87)).